Here is an 85-residue protein sequence, read N- to C-terminus: Probable dolichol-phosphate mannosyltransferase subunit 3 (85 aa).

The next 2 membrane-spanning stretches (helical) occupy residues V13–I33 and A37–F57.

Belongs to the DPM3 family.

It is found in the endoplasmic reticulum membrane. It participates in protein modification; protein glycosylation. In terms of biological role, stabilizer subunit of the dolichol-phosphate-mannose synthase complex. The polypeptide is Probable dolichol-phosphate mannosyltransferase subunit 3 (Caenorhabditis briggsae).